A 432-amino-acid polypeptide reads, in one-letter code: Adenylosuccinate synthetase (432 aa).

GTP is bound by residues 12–18 and 40–42; these read GDEGKGK and GHT. The active-site Proton acceptor is aspartate 13. Aspartate 13 and glycine 40 together coordinate Mg(2+). Residues 13–16, 38–41, threonine 133, arginine 147, glutamine 228, threonine 243, and arginine 307 contribute to the IMP site; these read DEGK and NAGH. The active-site Proton donor is the histidine 41. Residue 303–309 participates in substrate binding; that stretch reads TTTGRPR. GTP contacts are provided by residues arginine 309, 335 to 337, and 417 to 419; these read KLD and GVG.

Belongs to the adenylosuccinate synthetase family. Homodimer. It depends on Mg(2+) as a cofactor.

It localises to the cytoplasm. It catalyses the reaction IMP + L-aspartate + GTP = N(6)-(1,2-dicarboxyethyl)-AMP + GDP + phosphate + 2 H(+). The protein operates within purine metabolism; AMP biosynthesis via de novo pathway; AMP from IMP: step 1/2. In terms of biological role, plays an important role in the de novo pathway of purine nucleotide biosynthesis. Catalyzes the first committed step in the biosynthesis of AMP from IMP. The protein is Adenylosuccinate synthetase of Nocardioides sp. (strain ATCC BAA-499 / JS614).